Here is a 486-residue protein sequence, read N- to C-terminus: Glutamyl-tRNA(Gln) amidotransferase subunit A (486 aa).

Catalysis depends on charge relay system residues lysine 76 and serine 151. Residue serine 175 is the Acyl-ester intermediate of the active site.

It belongs to the amidase family. GatA subfamily. In terms of assembly, heterotrimer of A, B and C subunits.

The enzyme catalyses L-glutamyl-tRNA(Gln) + L-glutamine + ATP + H2O = L-glutaminyl-tRNA(Gln) + L-glutamate + ADP + phosphate + H(+). In terms of biological role, allows the formation of correctly charged Gln-tRNA(Gln) through the transamidation of misacylated Glu-tRNA(Gln) in organisms which lack glutaminyl-tRNA synthetase. The reaction takes place in the presence of glutamine and ATP through an activated gamma-phospho-Glu-tRNA(Gln). The polypeptide is Glutamyl-tRNA(Gln) amidotransferase subunit A (Chromohalobacter salexigens (strain ATCC BAA-138 / DSM 3043 / CIP 106854 / NCIMB 13768 / 1H11)).